Consider the following 314-residue polypeptide: 4-hydroxy-3-methylbut-2-enyl diphosphate reductase (314 aa).

Residue Cys12 coordinates [4Fe-4S] cluster. (2E)-4-hydroxy-3-methylbut-2-enyl diphosphate is bound by residues His41 and His74. Residues His41 and His74 each coordinate dimethylallyl diphosphate. Isopentenyl diphosphate contacts are provided by His41 and His74. Cys96 lines the [4Fe-4S] cluster pocket. His124 provides a ligand contact to (2E)-4-hydroxy-3-methylbut-2-enyl diphosphate. His124 lines the dimethylallyl diphosphate pocket. His124 lines the isopentenyl diphosphate pocket. Glu126 (proton donor) is an active-site residue. A (2E)-4-hydroxy-3-methylbut-2-enyl diphosphate-binding site is contributed by Thr167. Position 197 (Cys197) interacts with [4Fe-4S] cluster. Residues Ser225, Ser226, Asn227, and Ser269 each coordinate (2E)-4-hydroxy-3-methylbut-2-enyl diphosphate. Residues Ser225, Ser226, Asn227, and Ser269 each coordinate dimethylallyl diphosphate. 4 residues coordinate isopentenyl diphosphate: Ser225, Ser226, Asn227, and Ser269.

This sequence belongs to the IspH family. [4Fe-4S] cluster serves as cofactor.

The enzyme catalyses isopentenyl diphosphate + 2 oxidized [2Fe-2S]-[ferredoxin] + H2O = (2E)-4-hydroxy-3-methylbut-2-enyl diphosphate + 2 reduced [2Fe-2S]-[ferredoxin] + 2 H(+). The catalysed reaction is dimethylallyl diphosphate + 2 oxidized [2Fe-2S]-[ferredoxin] + H2O = (2E)-4-hydroxy-3-methylbut-2-enyl diphosphate + 2 reduced [2Fe-2S]-[ferredoxin] + 2 H(+). It participates in isoprenoid biosynthesis; dimethylallyl diphosphate biosynthesis; dimethylallyl diphosphate from (2E)-4-hydroxy-3-methylbutenyl diphosphate: step 1/1. The protein operates within isoprenoid biosynthesis; isopentenyl diphosphate biosynthesis via DXP pathway; isopentenyl diphosphate from 1-deoxy-D-xylulose 5-phosphate: step 6/6. Its function is as follows. Catalyzes the conversion of 1-hydroxy-2-methyl-2-(E)-butenyl 4-diphosphate (HMBPP) into a mixture of isopentenyl diphosphate (IPP) and dimethylallyl diphosphate (DMAPP). Acts in the terminal step of the DOXP/MEP pathway for isoprenoid precursor biosynthesis. The chain is 4-hydroxy-3-methylbut-2-enyl diphosphate reductase from Mannheimia succiniciproducens (strain KCTC 0769BP / MBEL55E).